A 407-amino-acid chain; its full sequence is Peptidase T (407 aa).

A Zn(2+)-binding site is contributed by H77. D79 is an active-site residue. Residue D140 coordinates Zn(2+). E174 (proton acceptor) is an active-site residue. Residues E175, D197, and H379 each contribute to the Zn(2+) site.

This sequence belongs to the peptidase M20B family. It depends on Zn(2+) as a cofactor.

The protein localises to the cytoplasm. The enzyme catalyses Release of the N-terminal residue from a tripeptide.. In terms of biological role, cleaves the N-terminal amino acid of tripeptides. The sequence is that of Peptidase T from Bacteroides fragilis (strain YCH46).